We begin with the raw amino-acid sequence, 58 residues long: Photosystem II reaction center protein K (58 aa).

Residues 1–21 (MTVSYSIYLENSLHFGDALLA) constitute a propeptide that is removed on maturation. A helical membrane pass occupies residues 29 to 49 (IFDPIVDVMPVIPVFFLLLAF).

The protein belongs to the PsbK family. In terms of assembly, PSII is composed of 1 copy each of membrane proteins PsbA, PsbB, PsbC, PsbD, PsbE, PsbF, PsbH, PsbI, PsbJ, PsbK, PsbL, PsbM, PsbT, PsbX, PsbY, PsbZ, Psb30/Ycf12, at least 3 peripheral proteins of the oxygen-evolving complex and a large number of cofactors. It forms dimeric complexes.

It localises to the plastid. The protein resides in the chloroplast thylakoid membrane. One of the components of the core complex of photosystem II (PSII). PSII is a light-driven water:plastoquinone oxidoreductase that uses light energy to abstract electrons from H(2)O, generating O(2) and a proton gradient subsequently used for ATP formation. It consists of a core antenna complex that captures photons, and an electron transfer chain that converts photonic excitation into a charge separation. This Adiantum capillus-veneris (Maidenhair fern) protein is Photosystem II reaction center protein K.